Consider the following 762-residue polypeptide: Endonuclease MutS2 (762 aa).

333-340 (GVNAGGKT) lines the ATP pocket. Positions 688–762 (LDLRGQRSEE…GGSGVKIVKL (75 aa)) constitute a Smr domain.

This sequence belongs to the DNA mismatch repair MutS family. MutS2 subfamily. As to quaternary structure, homodimer. Binds to stalled ribosomes, contacting rRNA.

In terms of biological role, endonuclease that is involved in the suppression of homologous recombination and thus may have a key role in the control of bacterial genetic diversity. Acts as a ribosome collision sensor, splitting the ribosome into its 2 subunits. Detects stalled/collided 70S ribosomes which it binds and splits by an ATP-hydrolysis driven conformational change. Acts upstream of the ribosome quality control system (RQC), a ribosome-associated complex that mediates the extraction of incompletely synthesized nascent chains from stalled ribosomes and their subsequent degradation. Probably generates substrates for RQC. The protein is Endonuclease MutS2 of Helicobacter pylori (strain J99 / ATCC 700824) (Campylobacter pylori J99).